The following is a 525-amino-acid chain: Mitochondrial-processing peptidase subunit alpha (525 aa).

A mitochondrion-targeting transit peptide spans 1–33 (MAAMVLAATRLLRGSGSWGRSRPRFGDPAYRRF). N6-succinyllysine is present on lysine 64. At lysine 299 the chain carries N6-acetyllysine.

It belongs to the peptidase M16 family. As to quaternary structure, heterodimer of PMPCA (alpha) and PMPCB (beta) subunits, forming the mitochondrial processing protease (MPP) in which PMPCA is involved in substrate recognition and binding and PMPCB is the catalytic subunit.

It localises to the mitochondrion matrix. The protein localises to the mitochondrion inner membrane. Its function is as follows. Substrate recognition and binding subunit of the essential mitochondrial processing protease (MPP), which cleaves the mitochondrial sequence off newly imported precursors proteins. This is Mitochondrial-processing peptidase subunit alpha (PMPCA) from Bos taurus (Bovine).